The chain runs to 499 residues: MFSRRNLLALGLAATVSAGPCDIYEAGDTPCVAAHSTTRALYSSFSGALYQLQRGSDDTTTTISPLTAGGIADASAQDTFCANTTCLITIIYDQSGNGNHLTQAPPGGFDGPDTDGYDNLASAIGAPVTLNGQKAYGVFMSPGTGYRNNEATGTATGDEAEGMYAVLDGTHYNDACCFDYGNAETSSTDTGAGHMEAIYLGNSTTWGYGAGDGPWIMVDMENNLFSGADEGYNSGDPSISYRFVTAAVKGGADKWAIRGANAASGSLSTYYSGARPDYSGYNPMSKEGAIILGIGGYNSNGAQGTFYEGVMTSGYPSDDTENSVQENIVAAKYVVGSLVSGPSFTSGEVVSLRVTTPGYTTRYIAHTDTTVNTQVVDDDSSTTLKEEASWTVVTGLANSQCFSFESVDTPGSYIRHYNFELLLNANDGTKQFHEDATFCPQAALNGEGTSLRSWSYPTRYFRHYENVLYAASNGGVQTFDSKTSFNNDVSFEIETAFAS.

The signal sequence occupies residues 1-17 (MFSRRNLLALGLAATVS). Residues 18 to 335 (AGPCDIYEAG…ENIVAAKYVV (318 aa)) are catalytic. 3 disulfides stabilise this stretch: Cys21-Cys31, Cys81-Cys86, and Cys176-Cys177. The N-linked (GlcNAc...) asparagine glycan is linked to Asn83. The N-linked (GlcNAc...) asparagine glycan is linked to Asn202. Asp219 serves as a coordination point for substrate. Glu221 functions as the Nucleophile in the catalytic mechanism. 11 residues coordinate substrate: Asn222, Asn223, Gly296, His416, Asn418, Phe419, Asp435, His463, Glu465, Leu468, and Asp488. The interval 336 to 499 (GSLVSGPSFT…SFEIETAFAS (164 aa)) is ABD. The cysteines at positions 401 and 439 are disulfide-linked.

It belongs to the glycosyl hydrolase 54 family.

The protein localises to the secreted. It catalyses the reaction Hydrolysis of terminal non-reducing alpha-L-arabinofuranoside residues in alpha-L-arabinosides.. Its pathway is glycan metabolism; L-arabinan degradation. Functionally, alpha-L-arabinofuranosidase involved in the degradation of arabinoxylan, a major component of plant hemicellulose. Able to hydrolyze 1,5-, 1,3- and 1,2-alpha-linkages not only in L-arabinofuranosyl oligosaccharides, but also in polysaccharides containing terminal non-reducing L-arabinofuranoses in side chains, like L-arabinan, arabinogalactan and arabinoxylan. The protein is Probable alpha-L-arabinofuranosidase B (abfB) of Aspergillus awamori (Black koji mold).